A 230-amino-acid polypeptide reads, in one-letter code: Potassium/proton antiporter CemA (230 aa).

Transmembrane regions (helical) follow at residues 7–27 (LPSL…SSSF), 106–126 (IILH…SFFL), 145–165 (LNDS…VGFH), and 181–201 (FGWA…PVIL).

This sequence belongs to the CemA family.

The protein resides in the plastid. It localises to the chloroplast inner membrane. The enzyme catalyses K(+)(in) + H(+)(out) = K(+)(out) + H(+)(in). In terms of biological role, contributes to K(+)/H(+) antiport activity by supporting proton efflux to control proton extrusion and homeostasis in chloroplasts in a light-dependent manner to modulate photosynthesis. Prevents excessive induction of non-photochemical quenching (NPQ) under continuous-light conditions. Indirectly promotes efficient inorganic carbon uptake into chloroplasts. The polypeptide is Potassium/proton antiporter CemA (Hordeum vulgare (Barley)).